A 304-amino-acid polypeptide reads, in one-letter code: Putative S-adenosyl-L-methionine-dependent methyltransferase MAP_4189c (304 aa).

Residues D130 and 159–160 each bind S-adenosyl-L-methionine; that span reads DL.

This sequence belongs to the UPF0677 family.

Exhibits S-adenosyl-L-methionine-dependent methyltransferase activity. This is Putative S-adenosyl-L-methionine-dependent methyltransferase MAP_4189c from Mycolicibacterium paratuberculosis (strain ATCC BAA-968 / K-10) (Mycobacterium paratuberculosis).